The following is a 208-amino-acid chain: ATP-dependent Clp protease proteolytic subunit (208 aa).

Catalysis depends on serine 112, which acts as the Nucleophile. Residue histidine 137 is part of the active site.

Belongs to the peptidase S14 family. In terms of assembly, fourteen ClpP subunits assemble into 2 heptameric rings which stack back to back to give a disk-like structure with a central cavity, resembling the structure of eukaryotic proteasomes.

The protein localises to the cytoplasm. It carries out the reaction Hydrolysis of proteins to small peptides in the presence of ATP and magnesium. alpha-casein is the usual test substrate. In the absence of ATP, only oligopeptides shorter than five residues are hydrolyzed (such as succinyl-Leu-Tyr-|-NHMec, and Leu-Tyr-Leu-|-Tyr-Trp, in which cleavage of the -Tyr-|-Leu- and -Tyr-|-Trp bonds also occurs).. Functionally, cleaves peptides in various proteins in a process that requires ATP hydrolysis. Has a chymotrypsin-like activity. Plays a major role in the degradation of misfolded proteins. The sequence is that of ATP-dependent Clp protease proteolytic subunit from Buchnera aphidicola subsp. Acyrthosiphon pisum (strain APS) (Acyrthosiphon pisum symbiotic bacterium).